A 105-amino-acid chain; its full sequence is Large ribosomal subunit protein eL36 (105 aa).

At Lys-62 the chain carries N6-acetyllysine.

Belongs to the eukaryotic ribosomal protein eL36 family. Component of the large ribosomal subunit.

It is found in the cytoplasm. The protein resides in the cytosol. Its function is as follows. Component of the large ribosomal subunit. The ribosome is a large ribonucleoprotein complex responsible for the synthesis of proteins in the cell. The chain is Large ribosomal subunit protein eL36 (RPL36) from Bos taurus (Bovine).